The following is a 632-amino-acid chain: 1-deoxy-D-xylulose-5-phosphate synthase (632 aa).

The segment at 1–25 is disordered; sequence MPTTFHEIPRKRPTTPLLDRANTPD. Residues histidine 87 and 128–130 each bind thiamine diphosphate; that span reads GHS. Aspartate 159 serves as a coordination point for Mg(2+). Thiamine diphosphate-binding positions include 160–161, asparagine 188, phenylalanine 295, and glutamate 378; that span reads GA. Asparagine 188 contributes to the Mg(2+) binding site.

Belongs to the transketolase family. DXPS subfamily. Homodimer. The cofactor is Mg(2+). Thiamine diphosphate serves as cofactor.

It carries out the reaction D-glyceraldehyde 3-phosphate + pyruvate + H(+) = 1-deoxy-D-xylulose 5-phosphate + CO2. The protein operates within metabolic intermediate biosynthesis; 1-deoxy-D-xylulose 5-phosphate biosynthesis; 1-deoxy-D-xylulose 5-phosphate from D-glyceraldehyde 3-phosphate and pyruvate: step 1/1. Catalyzes the acyloin condensation reaction between C atoms 2 and 3 of pyruvate and glyceraldehyde 3-phosphate to yield 1-deoxy-D-xylulose-5-phosphate (DXP). This chain is 1-deoxy-D-xylulose-5-phosphate synthase, found in Pseudomonas fluorescens (strain Pf0-1).